A 93-amino-acid polypeptide reads, in one-letter code: Small ribosomal subunit protein bS20 (93 aa).

This sequence belongs to the bacterial ribosomal protein bS20 family.

Its function is as follows. Binds directly to 16S ribosomal RNA. The polypeptide is Small ribosomal subunit protein bS20 (Dictyoglomus turgidum (strain DSM 6724 / Z-1310)).